The primary structure comprises 469 residues: Glutamate--tRNA ligase (469 aa).

Residues 11–21 (PSPTGFIHLGN) carry the 'HIGH' region motif. Over residues 121-131 (PRYDGTWRPEP) the composition is skewed to basic and acidic residues. Positions 121 to 141 (PRYDGTWRPEPGKVLPEPPPG) are disordered. Positions 243–247 (KMSKR) match the 'KMSKS' region motif. Lysine 246 serves as a coordination point for ATP.

Belongs to the class-I aminoacyl-tRNA synthetase family. Glutamate--tRNA ligase type 1 subfamily. Monomer.

Its subcellular location is the cytoplasm. It catalyses the reaction tRNA(Glu) + L-glutamate + ATP = L-glutamyl-tRNA(Glu) + AMP + diphosphate. In terms of biological role, catalyzes the attachment of glutamate to tRNA(Glu) in a two-step reaction: glutamate is first activated by ATP to form Glu-AMP and then transferred to the acceptor end of tRNA(Glu). This is Glutamate--tRNA ligase from Burkholderia multivorans (strain ATCC 17616 / 249).